The chain runs to 45 residues: DNA-directed RNA polymerase subunit Rpo12 (45 aa).

The Zn(2+) site is built by cysteine 8, cysteine 23, and cysteine 26.

Belongs to the archaeal Rpo12/eukaryotic RPC10 RNA polymerase subunit family. As to quaternary structure, part of the RNA polymerase complex. Requires Zn(2+) as cofactor.

The protein localises to the cytoplasm. The enzyme catalyses RNA(n) + a ribonucleoside 5'-triphosphate = RNA(n+1) + diphosphate. In terms of biological role, DNA-dependent RNA polymerase (RNAP) catalyzes the transcription of DNA into RNA using the four ribonucleoside triphosphates as substrates. The polypeptide is DNA-directed RNA polymerase subunit Rpo12 (Methanocella arvoryzae (strain DSM 22066 / NBRC 105507 / MRE50)).